Consider the following 103-residue polypeptide: Potassium voltage-gated channel subfamily E member 3 (103 aa).

N-linked (GlcNAc...) asparagine glycosylation is found at asparagine 5, asparagine 22, and asparagine 41. The tract at residues 32 to 53 is disordered; the sequence is RPGPGLGPDNQTEERRASLPGR. The span at 43 to 53 shows a compositional bias: basic and acidic residues; it reads TEERRASLPGR. Residues 57 to 77 traverse the membrane as a helical segment; sequence SYMYILFVMFLFAVTVGSLIL. The tract at residues 68-79 is interaction with KCNQ1; that stretch reads FAVTVGSLILGY. Topologically, residues 78–103 are cytoplasmic; that stretch reads GYTRSRKVDKRSDPYHVYIKNRVSMI.

It belongs to the potassium channel KCNE family. In terms of assembly, interacts with KCNB1. Interacts with KCNC2. Associates with KCNC4/Kv3.4. Interacts with KCNQ1; associates with a KCNQ1:KCNE3 stoichiometry of 4:4; produces a current with nearly instantaneous activation with a linear current-voltage relationship and alters membrane raft localization; affects KCNQ1 structure and gating properties. In terms of tissue distribution, expressed in hippocampal neurons (at protein level). Widely expressed with highest levels in kidney and moderate levels in small intestine.

The protein localises to the cell membrane. The protein resides in the cytoplasm. It localises to the perikaryon. Its subcellular location is the cell projection. It is found in the dendrite. The protein localises to the membrane raft. In terms of biological role, ancillary protein that functions as a regulatory subunit of the voltage-gated potassium (Kv) channel complex composed of pore-forming and potassium-conducting alpha subunits and of regulatory beta subunits. KCNE3 beta subunit modulates the gating kinetics and enhances stability of the channel complex. Alters the gating of the delayed rectifier Kv channel containing KCNB1 alpha subunit. Associates with KCNC4/Kv3.4 alpha subunit to form the subthreshold Kv channel in skeletal muscle and to establish the resting membrane potential (RMP) in muscle cells. Association with KCNQ1/KCLQT1 alpha subunit may form the intestinal cAMP-stimulated potassium channel involved in chloride secretion that produces a current with nearly instantaneous activation with a linear current-voltage relationship. The chain is Potassium voltage-gated channel subfamily E member 3 from Homo sapiens (Human).